The following is a 267-amino-acid chain: Exopolysaccharide production negative regulator (267 aa).

A signal peptide spans 1–23; it reads MVTSEFKLFKFMLMGMSIAVALA.

Its function is as follows. Negatively modulates exopolysaccharide (EPS) biosynthesis. In Rhizobium leguminosarum bv. viciae, this protein is Exopolysaccharide production negative regulator (exoR).